The sequence spans 322 residues: Protein mono-ADP-ribosyltransferase PARP16 (322 aa).

The Cytoplasmic portion of the chain corresponds to 1–287; it reads MQPSGWAAAR…RASSQLSWFS (287 aa). A PARP alpha-helical domain is found at 5-91; the sequence is GWAAAREAAG…AWDLVSWILS (87 aa). The residue at position 37 (Asp37) is an ADP-ribosyl aspartic acid. Glu70 carries the ADP-ribosyl glutamic acid modification. Residues 94 to 279 enclose the PARP catalytic domain; that stretch reads VLTIHSAGKA…VYSQKPPKRA (186 aa). 2 positions are modified to N6-(ADP-ribosyl)lysine: Lys110 and Lys137. NAD(+) is bound by residues His152, Tyr182, and Tyr254. Residues 288-308 traverse the membrane as a helical segment; the sequence is SHWFTVMISLYLLLLLIVSVI. Over 309–322 the chain is Lumenal; that stretch reads NSSAFQHFWNRAKR.

This sequence belongs to the ARTD/PARP family. Interacts with KPNB1. Auto-mono-ADP-ribosylated.

The protein resides in the endoplasmic reticulum membrane. It carries out the reaction L-aspartyl-[protein] + NAD(+) = 4-O-(ADP-D-ribosyl)-L-aspartyl-[protein] + nicotinamide. It catalyses the reaction L-glutamyl-[protein] + NAD(+) = 5-O-(ADP-D-ribosyl)-L-glutamyl-[protein] + nicotinamide. The catalysed reaction is L-lysyl-[protein] + NAD(+) = N(6)-(ADP-D-ribosyl)-L-lysyl-[protein] + nicotinamide + H(+). With respect to regulation, in absence of activation signal, PARP16 is autoinhibited by the PARP alpha-helical domain (also named HD region), which prevents effective NAD(+)-binding. Activity is highly stimulated by signals, which unfold the PARP alpha-helical domain, relieving autoinhibition. Functionally, intracellular mono-ADP-ribosyltransferase that plays a role in different processes, such as protein translation and unfolded protein response (UPR), through the mono-ADP-ribosylation of proteins involved in those processes. Acts as an inhibitor of protein translation by catalyzing mono-ADP-ribosylation of ribosomal subunits, such as RPL14 and RPS6, thereby inhibiting polysome assembly and mRNA loading. Mono-ADP-ribosylation of ribosomal subunits is promoted by NMNAT2. Involved in the unfolded protein response (UPR) by ADP-ribosylating and activating EIF2AK3 and ERN1, two important UPR effectors. May also mediate mono-ADP-ribosylation of karyopherin KPNB1 a nuclear import factor. May not modify proteins on arginine or cysteine residues compared to other mono-ADP-ribosyltransferases. This chain is Protein mono-ADP-ribosyltransferase PARP16, found in Homo sapiens (Human).